The following is a 158-amino-acid chain: 2-C-methyl-D-erythritol 2,4-cyclodiphosphate synthase (158 aa).

A divalent metal cation is bound by residues Asp-10 and His-12. 4-CDP-2-C-methyl-D-erythritol 2-phosphate-binding positions include 10 to 12 (DVH) and 36 to 37 (HS). A divalent metal cation is bound at residue His-44. 4-CDP-2-C-methyl-D-erythritol 2-phosphate is bound by residues 58 to 60 (DIG), 63 to 67 (FSDTD), and Arg-144.

This sequence belongs to the IspF family. Homotrimer. It depends on a divalent metal cation as a cofactor.

The enzyme catalyses 4-CDP-2-C-methyl-D-erythritol 2-phosphate = 2-C-methyl-D-erythritol 2,4-cyclic diphosphate + CMP. It functions in the pathway isoprenoid biosynthesis; isopentenyl diphosphate biosynthesis via DXP pathway; isopentenyl diphosphate from 1-deoxy-D-xylulose 5-phosphate: step 4/6. In terms of biological role, involved in the biosynthesis of isopentenyl diphosphate (IPP) and dimethylallyl diphosphate (DMAPP), two major building blocks of isoprenoid compounds. Catalyzes the conversion of 4-diphosphocytidyl-2-C-methyl-D-erythritol 2-phosphate (CDP-ME2P) to 2-C-methyl-D-erythritol 2,4-cyclodiphosphate (ME-CPP) with a corresponding release of cytidine 5-monophosphate (CMP). The chain is 2-C-methyl-D-erythritol 2,4-cyclodiphosphate synthase from Burkholderia vietnamiensis (strain G4 / LMG 22486) (Burkholderia cepacia (strain R1808)).